Reading from the N-terminus, the 313-residue chain is tRNA dimethylallyltransferase (313 aa).

9–16 (GPTATGKS) contacts ATP. 11–16 (TATGKS) provides a ligand contact to substrate.

It belongs to the IPP transferase family. Monomer. Requires Mg(2+) as cofactor.

It carries out the reaction adenosine(37) in tRNA + dimethylallyl diphosphate = N(6)-dimethylallyladenosine(37) in tRNA + diphosphate. Its function is as follows. Catalyzes the transfer of a dimethylallyl group onto the adenine at position 37 in tRNAs that read codons beginning with uridine, leading to the formation of N6-(dimethylallyl)adenosine (i(6)A). This Nocardia farcinica (strain IFM 10152) protein is tRNA dimethylallyltransferase.